The sequence spans 941 residues: Cilia- and flagella-associated protein 69 (941 aa).

It is found in the cell projection. The protein localises to the cilium. Its subcellular location is the flagellum. Cilium- and flagellum-associated protein. In the olfactory epithelium, regulates the speed of activation and termination of the odor response and thus contributes to the robustness of olfactory transduction pathways. Required for sperm flagellum assembly and stability. The protein is Cilia- and flagella-associated protein 69 of Callithrix jacchus (White-tufted-ear marmoset).